The primary structure comprises 592 residues: Pyruvate decarboxylase 3 (592 aa).

Substrate is bound by residues D54 and H141. The thiamine pyrophosphate binding stretch occupies residues 419–501; it reads DSWFNCQKLK…FLINNGGYTI (83 aa). Mg(2+) contacts are provided by D469, N496, and G498. E502 lines the substrate pocket.

It belongs to the TPP enzyme family. In terms of assembly, homotetramer. A metal cation serves as cofactor. Requires thiamine diphosphate as cofactor. As to expression, expressed at low levels in roots and shoots.

The catalysed reaction is a 2-oxocarboxylate + H(+) = an aldehyde + CO2. The chain is Pyruvate decarboxylase 3 (PDC3) from Arabidopsis thaliana (Mouse-ear cress).